The chain runs to 215 residues: Adenylate kinase (215 aa).

Glycine 10–threonine 15 contributes to the ATP binding site. The segment at serine 30–valine 59 is NMP. AMP contacts are provided by residues threonine 31, arginine 36, glycine 57–valine 59, glycine 85–arginine 88, and glutamine 92. Positions glycine 122–aspartate 159 are LID. ATP-binding positions include arginine 123 and valine 132 to tyrosine 133. AMP contacts are provided by arginine 156 and arginine 167. Glycine 201 is a binding site for ATP.

This sequence belongs to the adenylate kinase family. Monomer.

It is found in the cytoplasm. The enzyme catalyses AMP + ATP = 2 ADP. The protein operates within purine metabolism; AMP biosynthesis via salvage pathway; AMP from ADP: step 1/1. Functionally, catalyzes the reversible transfer of the terminal phosphate group between ATP and AMP. Plays an important role in cellular energy homeostasis and in adenine nucleotide metabolism. The sequence is that of Adenylate kinase from Pseudomonas aeruginosa (strain LESB58).